The following is a 492-amino-acid chain: NADH-quinone oxidoreductase subunit N (492 aa).

14 consecutive transmembrane segments (helical) span residues 12 to 32, 44 to 64, 76 to 96, 115 to 135, 138 to 158, 169 to 189, 212 to 232, 244 to 264, 272 to 292, 306 to 326, 334 to 354, 381 to 401, 416 to 438, and 463 to 483; these read LLPY…MIAI, ISVV…AGII, LFVI…CALA, LYLL…AQHL, FFMS…YTYM, YLVL…FIYA, LILG…AAPF, PAPI…ALAV, LLAL…SILL, LLGY…VSIG, SMYM…VTLM, TAVM…AGFI, WFLA…RVLL, and IMVI…NSMI.

It belongs to the complex I subunit 2 family. In terms of assembly, NDH-1 is composed of 14 different subunits. Subunits NuoA, H, J, K, L, M, N constitute the membrane sector of the complex.

Its subcellular location is the cell inner membrane. It carries out the reaction a quinone + NADH + 5 H(+)(in) = a quinol + NAD(+) + 4 H(+)(out). Its function is as follows. NDH-1 shuttles electrons from NADH, via FMN and iron-sulfur (Fe-S) centers, to quinones in the respiratory chain. The immediate electron acceptor for the enzyme in this species is believed to be ubiquinone. Couples the redox reaction to proton translocation (for every two electrons transferred, four hydrogen ions are translocated across the cytoplasmic membrane), and thus conserves the redox energy in a proton gradient. The chain is NADH-quinone oxidoreductase subunit N from Psychrobacter arcticus (strain DSM 17307 / VKM B-2377 / 273-4).